We begin with the raw amino-acid sequence, 88 residues long: MVSNTKKLELIKSFGKNEKDSGSIEAQIAILTEDIESLKLHFEKNKKDLHSRRGFIAKINHRKKLLAYLRKNKFTSYASLIEKLNIRK.

This sequence belongs to the universal ribosomal protein uS15 family. In terms of assembly, part of the 30S ribosomal subunit. Forms a bridge to the 50S subunit in the 70S ribosome, contacting the 23S rRNA.

In terms of biological role, one of the primary rRNA binding proteins, it binds directly to 16S rRNA where it helps nucleate assembly of the platform of the 30S subunit by binding and bridging several RNA helices of the 16S rRNA. Forms an intersubunit bridge (bridge B4) with the 23S rRNA of the 50S subunit in the ribosome. In Mycoplasma mobile (strain ATCC 43663 / 163K / NCTC 11711) (Mesomycoplasma mobile), this protein is Small ribosomal subunit protein uS15.